The sequence spans 240 residues: Uridylate kinase (240 aa).

12–15 provides a ligand contact to ATP; the sequence is KLSG. The involved in allosteric activation by GTP stretch occupies residues 20–25; the sequence is GEQGNG. Residue Gly-54 participates in UMP binding. Residues Gly-55 and Arg-59 each contribute to the ATP site. UMP contacts are provided by residues Asp-74 and 135–142; that span reads TGNPYFST. The ATP site is built by Asn-163, Tyr-169, and Asp-172.

The protein belongs to the UMP kinase family. In terms of assembly, homohexamer.

Its subcellular location is the cytoplasm. It carries out the reaction UMP + ATP = UDP + ADP. The protein operates within pyrimidine metabolism; CTP biosynthesis via de novo pathway; UDP from UMP (UMPK route): step 1/1. With respect to regulation, allosterically activated by GTP. Inhibited by UTP. Its function is as follows. Catalyzes the reversible phosphorylation of UMP to UDP. The chain is Uridylate kinase from Bacillus licheniformis (strain ATCC 14580 / DSM 13 / JCM 2505 / CCUG 7422 / NBRC 12200 / NCIMB 9375 / NCTC 10341 / NRRL NRS-1264 / Gibson 46).